The following is a 22-amino-acid chain: Mu-conotoxin CnIIIA (22 aa).

3 cysteine pairs are disulfide-bonded: C3/C15, C4/C21, and C10/C22. C22 carries the cysteine amide modification.

It belongs to the conotoxin M superfamily. As to expression, expressed by the venom duct. Has not been isolated from the crude venom.

The protein resides in the secreted. Mu-conotoxins block voltage-gated sodium channels (Nav). This synthetic toxin moderately blocks rNav1.1/SCN1A, rNav1.2/SCN2A, rNav1.3/SCN3A, rNav1.4/SCN4A, rNav1.5/SCN5A, and mNav1.6/SCN8A. This block is very slowly reversible. Causes seizures when injected intracranially into mice. The protein is Mu-conotoxin CnIIIA of Conus consors (Singed cone).